Consider the following 85-residue polypeptide: Polcalcin Bet v 4 (85 aa).

2 EF-hand domains span residues 7–42 and 42–77; these read QDKAERERIFKRFDANGDGKISAAELGEALKTLGSI and ITPDEVKHMMAEIDTDGDGFISFQEFTDFGRANRGL. The Ca(2+) site is built by D20, N22, D24, K26, E31, D55, D57, D59, and E66.

As to quaternary structure, monomer.

In Betula pendula (European white birch), this protein is Polcalcin Bet v 4 (BETV4).